The primary structure comprises 157 residues: Protein Smg (157 aa).

This sequence belongs to the Smg family.

In Escherichia coli O8 (strain IAI1), this protein is Protein Smg.